The sequence spans 124 residues: Small ribosomal subunit protein uS13 (124 aa).

A compositionally biased stretch (basic residues) spans 94 to 117; it reads NLPVRGQRTRTNARTRKGPRKTVA. The disordered stretch occupies residues 94 to 124; that stretch reads NLPVRGQRTRTNARTRKGPRKTVANKKIESK.

This sequence belongs to the universal ribosomal protein uS13 family. Part of the 30S ribosomal subunit. Forms a loose heterodimer with protein S19. Forms two bridges to the 50S subunit in the 70S ribosome.

Functionally, located at the top of the head of the 30S subunit, it contacts several helices of the 16S rRNA. In the 70S ribosome it contacts the 23S rRNA (bridge B1a) and protein L5 of the 50S subunit (bridge B1b), connecting the 2 subunits; these bridges are implicated in subunit movement. Contacts the tRNAs in the A and P-sites. The sequence is that of Small ribosomal subunit protein uS13 from Mycoplasma pneumoniae (strain ATCC 29342 / M129 / Subtype 1) (Mycoplasmoides pneumoniae).